The following is a 351-amino-acid chain: Peptide chain release factor 1 (351 aa).

Gln229 carries the N5-methylglutamine modification. The interval 278-297 (RVDDERSADRAAQVGSGDRS) is disordered.

Belongs to the prokaryotic/mitochondrial release factor family. In terms of processing, methylated by PrmC. Methylation increases the termination efficiency of RF1.

It localises to the cytoplasm. Its function is as follows. Peptide chain release factor 1 directs the termination of translation in response to the peptide chain termination codons UAG and UAA. This is Peptide chain release factor 1 from Roseobacter denitrificans (strain ATCC 33942 / OCh 114) (Erythrobacter sp. (strain OCh 114)).